A 171-amino-acid chain; its full sequence is MEKANSFTKEQLVACGHGNLLGPNRPRLPVDNMLMIDRIITINEDGGAFGKGEIIAELDITPDLWFFDCHFISDPVMPGCLGLDAMWQLVGFFLGWEGAEGKGRALGVGEVKFTGQVLPDAKKVTYKLNIKRKIHRKLVMGIADATMEVDGRQIYSATDLKVGIFSDTSTF.

His70 is a catalytic residue.

It belongs to the thioester dehydratase family. FabA subfamily. As to quaternary structure, homodimer.

Its subcellular location is the cytoplasm. The enzyme catalyses a (3R)-hydroxyacyl-[ACP] = a (2E)-enoyl-[ACP] + H2O. The catalysed reaction is (3R)-hydroxydecanoyl-[ACP] = (2E)-decenoyl-[ACP] + H2O. It carries out the reaction (2E)-decenoyl-[ACP] = (3Z)-decenoyl-[ACP]. The protein operates within lipid metabolism; fatty acid biosynthesis. In terms of biological role, necessary for the introduction of cis unsaturation into fatty acids. Catalyzes the dehydration of (3R)-3-hydroxydecanoyl-ACP to E-(2)-decenoyl-ACP and then its isomerization to Z-(3)-decenoyl-ACP. Can catalyze the dehydratase reaction for beta-hydroxyacyl-ACPs with saturated chain lengths up to 16:0, being most active on intermediate chain length. The chain is 3-hydroxydecanoyl-[acyl-carrier-protein] dehydratase from Shewanella frigidimarina (strain NCIMB 400).